A 421-amino-acid polypeptide reads, in one-letter code: Tyrosine--tRNA ligase (421 aa).

Y38 is an L-tyrosine binding site. The 'HIGH' region motif lies at 43–52 (PTGDSLHIGH). The L-tyrosine site is built by Y169 and Q173. The short motif at 231 to 235 (KFGKS) is the 'KMSKS' region element. K234 lines the ATP pocket. One can recognise an S4 RNA-binding domain in the interval 353–419 (KNLVDFLVDT…GKKKYTLVHI (67 aa)).

This sequence belongs to the class-I aminoacyl-tRNA synthetase family. TyrS type 1 subfamily. As to quaternary structure, homodimer.

Its subcellular location is the cytoplasm. The enzyme catalyses tRNA(Tyr) + L-tyrosine + ATP = L-tyrosyl-tRNA(Tyr) + AMP + diphosphate + H(+). In terms of biological role, catalyzes the attachment of tyrosine to tRNA(Tyr) in a two-step reaction: tyrosine is first activated by ATP to form Tyr-AMP and then transferred to the acceptor end of tRNA(Tyr). The protein is Tyrosine--tRNA ligase of Lactobacillus delbrueckii subsp. bulgaricus (strain ATCC BAA-365 / Lb-18).